The primary structure comprises 283 residues: Cilia- and flagella-associated protein 77 (283 aa).

The interval 151–170 (DQEDRRQKEPPPIPPNMTFG) is disordered.

Belongs to the CFAP77 family. Microtubule inner protein component of sperm flagellar doublet microtubules.

Its subcellular location is the cytoplasm. It is found in the cytoskeleton. The protein localises to the cilium axoneme. It localises to the flagellum axoneme. Its function is as follows. Microtubule inner protein (MIP) part of the dynein-decorated doublet microtubules (DMTs) in cilia axoneme, which is required for motile cilia beating. The polypeptide is Cilia- and flagella-associated protein 77 (Mus musculus (Mouse)).